We begin with the raw amino-acid sequence, 251 residues long: Capsid protein (251 aa).

Residues 3–20 carry the Bipartite nuclear localization signal motif; the sequence is KRDLPWRSMAGTSKVSRN. Residues 35–49 carry the Nuclear localization signal motif; that stretch reads KAAEWVNRPMYRKPR. A zinc finger lies at 63–80; the sequence is CEGPCKVQSFEQRHDISH. A Nuclear export signal motif is present at residues 96-117; sequence ITHRVGKRFCVKSVYILGKIWM. Residues 195-242 carry the Bipartite nuclear localization signal motif; sequence KRFWKVNNHVVYNHQEAGKYENHTENALLLYMACTHASNPVYATLKIR.

Belongs to the geminiviridae capsid protein family. As to quaternary structure, homomultimer. Binds to single-stranded and double-stranded viral DNA. Interacts (via nuclear localization signals) with host importin alpha-1a.

It is found in the virion. The protein localises to the host nucleus. Encapsidates the viral DNA into characteristic twinned ('geminate') particles. Binds the genomic viral ssDNA and shuttles it into and out of the cell nucleus. The CP of bipartite geminiviruses is not required for cell-to-cell or systemic movement. The sequence is that of Capsid protein from Tomato mottle virus (isolate Florida) (ToMoV).